We begin with the raw amino-acid sequence, 415 residues long: Probable cytosolic iron-sulfur protein assembly protein 1 (415 aa).

Residues 9-48 (AHDDKVWSLSSHPTLPLLATASTDKCSNIYRLSCSNASSS) form a WD 1 repeat. The tract at residues 45–70 (ASSSSSSSSPPSPPSPPSSSSPRRNF) is disordered. Positions 54-63 (PPSPPSPPSS) are enriched in pro residues. WD repeat units follow at residues 79–131 (THRR…DDNT), 160–200 (GHEN…EEFE), 207–246 (DHTQDVKHVTWHPTRNLLASSSYDDTIRVYKQEFDDDEWS), 253–300 (GHEG…GFNG), 335–374 (IHTHAIYSVAWSSSSGKIATAGSDGRIVVYKETNAGWEVE), and 380–415 (AHGVYEINCVIWAKLDLDQEVLISGGDDGNVNIWEV).

It belongs to the WD repeat CIA1 family. In terms of assembly, interacts with NAR1.

The protein localises to the cytoplasm. Its subcellular location is the nucleus. Essential component of the cytosolic iron-sulfur (Fe/S) protein assembly machinery. Required for the maturation of extramitochondrial Fe/S proteins. This Lodderomyces elongisporus (strain ATCC 11503 / CBS 2605 / JCM 1781 / NBRC 1676 / NRRL YB-4239) (Yeast) protein is Probable cytosolic iron-sulfur protein assembly protein 1.